The sequence spans 68 residues: Pantinin-3 (68 aa).

A signal peptide spans 1–23 (MKTQFAILLIALVLFQLLSQSDA). A Leucine amide modification is found at Leu36. Residues 40-68 (GLNELDNLDELFDGEISQADIDFLKELMS) constitute a propeptide that is removed on maturation.

This sequence belongs to the non-disulfide-bridged peptide (NDBP) superfamily. Short antimicrobial peptide (group 4) family. In terms of tissue distribution, expressed by the venom gland.

It is found in the secreted. The protein resides in the target cell membrane. In terms of biological role, amphipathic peptide that possesses relatively strong activities against Gram-positive bacteria and a fungus, but has very weak antimicrobial activities against Gram-negative bacteria. Also exhibits mild hemolytic activities against human erythrocytes (16 uM induce 70% of hemolysis). Furthermore, this peptide potently inhibits the growth of vancomycin-resistant Enterococcus (VRE) S13, a pathogen that can cause a number of human infections. Minimal inhibitory concentration (MIC) are the following: 16 uM against S.aureus, 6 uM against B.magaterium, 8 uM against M.luteus, 4 uM against VRE, 12 uM against methicillin-resistant S.aureus, 36 uM against E.coli, &gt;87 uM against P.putida, 87 uM against K.oxytoca, &gt;87 uM against E.cloacae, 84 uM against S.enterica and 17 uM against the fungus C.tropicalis. The chain is Pantinin-3 from Pandinus imperator (Emperor scorpion).